We begin with the raw amino-acid sequence, 106 residues long: COX assembly mitochondrial protein homolog (106 aa).

Ala2 is modified (N-acetylalanine). One can recognise a CHCH domain in the interval Lys28–Pro71. 2 short sequence motifs (cx9C motif) span residues Cys31–Cys41 and Cys53–Cys63. Cystine bridges form between Cys31/Cys63 and Cys41/Cys53.

This sequence belongs to the CMC family. As to quaternary structure, component of the MITRAC (mitochondrial translation regulation assembly intermediate of cytochrome c oxidase complex) complex, the core components of this complex being COA3/MITRAC12 and COX14.

Its subcellular location is the mitochondrion. Component of the MITRAC (mitochondrial translation regulation assembly intermediate of cytochrome c oxidase complex) complex, that regulates cytochrome c oxidase assembly. This Homo sapiens (Human) protein is COX assembly mitochondrial protein homolog (CMC1).